The sequence spans 307 residues: Woronin sorting complex protein (307 aa).

3 helical membrane-spanning segments follow: residues 106-125 (MATY…IWIL), 146-167 (NLIV…IAGA), and 207-227 (AWMP…NYIT). Residues 241–264 (GDGAHGDHRHDRERERDRERERHS) are compositionally biased toward basic and acidic residues. Residues 241 to 307 (GDGAHGDHRH…YPSLGQNPRY (67 aa)) are disordered. Residues 266–278 (PPHGHGPSHGGRP) are compositionally biased toward low complexity.

Belongs to the peroxisomal membrane protein PXMP2/4 family. As to quaternary structure, self-assembles into detergent-resistant oligomers and forms a complex with hex-1 assemblies.

The protein resides in the peroxisome membrane. Its subcellular location is the cell septum. Its function is as follows. Woronin sorting complex protein involved in both Woronin bodies (WB) formation and inherence. Localizes to large peroxisome membranes where it self-assembles into detergent-resistant oligomers that envelop hex-1 assemblies, producing asymmetrical nascent WBs. These structures are then delivered to the cell cortex, which permits partitioning of the nascent WB and WB inheritance. The sequence is that of Woronin sorting complex protein from Neurospora crassa (strain ATCC 24698 / 74-OR23-1A / CBS 708.71 / DSM 1257 / FGSC 987).